The sequence spans 94 residues: Co-chaperonin GroES (94 aa).

It belongs to the GroES chaperonin family. Heptamer of 7 subunits arranged in a ring. Interacts with the chaperonin GroEL.

It localises to the cytoplasm. Functionally, together with the chaperonin GroEL, plays an essential role in assisting protein folding. The GroEL-GroES system forms a nano-cage that allows encapsulation of the non-native substrate proteins and provides a physical environment optimized to promote and accelerate protein folding. GroES binds to the apical surface of the GroEL ring, thereby capping the opening of the GroEL channel. This is Co-chaperonin GroES from Staphylococcus epidermidis (strain ATCC 35984 / DSM 28319 / BCRC 17069 / CCUG 31568 / BM 3577 / RP62A).